We begin with the raw amino-acid sequence, 629 residues long: Long-chain-fatty-acid--AMP ligase FadD32 (629 aa).

ATP-binding positions include 186–191, serine 341, alanine 345, aspartate 468, and arginine 482; that span reads TSGSTR.

Belongs to the ATP-dependent AMP-binding enzyme family. Monomer.

It carries out the reaction a long-chain fatty acid + holo-[ACP] + ATP = a long-chain fatty acyl-[ACP] + AMP + diphosphate. The catalysed reaction is dodecanoate + ATP + H(+) = dodecanoyl-AMP + diphosphate. The enzyme catalyses tetradecanoate + ATP + H(+) = tetradecanoyl-AMP + diphosphate. It functions in the pathway lipid metabolism; mycolic acid biosynthesis. The acyl-AMP ligase activity is inhibited by the alkylphosphate esters of AMP, adenosine 50-dodecylphosphate (AMPC12) and eicosyl-AMP (AMPC20). Involved in the biosynthesis of mycolic acids. Catalyzes the activation of long-chain fatty acids as acyl-adenylates (acyl-AMP), which are then transferred to the phosphopantetheine arm of the polyketide synthase Pks13 for further chain extension. Can use dodecanoate (C12) and tetradecanoate (C14). The chain is Long-chain-fatty-acid--AMP ligase FadD32 (fadD32) from Mycobacterium marinum (strain ATCC BAA-535 / M).